The chain runs to 119 residues: RNA guanine-N7 methyltransferase activating subunit (119 aa).

Positions 1–55 are interaction with RNMT; the sequence is MSDTSEEIPNFEEMFASRFTKDDKEYQEYLKRPPESPPIVEEWNSRAGGNQRNRG. Residues 30–119 form a disordered region; that stretch reads LKRPPESPPI…HNQRPPYGYY (90 aa). Serine 36 carries the post-translational modification Phosphoserine. The RNMT-activating domain signature appears at 36–42; it reads SPPIVEE. Positions 47–61 are enriched in polar residues; that stretch reads AGGNQRNRGNWLQDN. Residues 56 to 119 form an RNA-binding region; it reads NWLQDNRQFR…HNQRPPYGYY (64 aa). Over residues 62-73 the composition is skewed to basic and acidic residues; the sequence is RQFRGRDNRRGW. At arginine 85 the chain carries Omega-N-methylarginine. Serine 86 is modified (phosphoserine). Residues 89-112 are compositionally biased toward low complexity; it reads NNNYPQQRPEPYYQQQYTQYGHNQ.

This sequence belongs to the RAM family. Interacts with RNMT; this interaction enhances mRNA binding and cap methyltransferase activity.

It is found in the nucleus. In terms of biological role, regulatory subunit of the mRNA-capping methyltransferase RNMT:RAMAC complex that methylates the N7 position of the added guanosine to the 5'-cap structure of mRNAs. Promotes the recruitment of the methyl donor, S-adenosyl-L-methionine, to RNMT. Regulates RNMT expression by a post-transcriptional stabilizing mechanism. Binds RNA. The sequence is that of RNA guanine-N7 methyltransferase activating subunit (Ramac) from Mus musculus (Mouse).